A 73-amino-acid polypeptide reads, in one-letter code: Conotoxin Asp7/Gla(3)-TxVI (73 aa).

A signal peptide spans 1–19 (MQKLIILLLVAAVLMSTQA). Residues 20–44 (VLQEKRPKEKIKFLSKRKTDAEKQQ) constitute a propeptide that is removed on maturation. 3 disulfides stabilise this stretch: cysteine 48/cysteine 62, cysteine 55/cysteine 66, and cysteine 61/cysteine 71. 2 positions are modified to 4-hydroxyproline: proline 49 and proline 54. 4-carboxyglutamate is present on glutamate 60. Position 64 is a 6'-bromotryptophan (tryptophan 64).

As to expression, expressed by the venom duct.

The protein resides in the secreted. The protein is Conotoxin Asp7/Gla(3)-TxVI of Conus textile (Cloth-of-gold cone).